Reading from the N-terminus, the 202-residue chain is Orotate phosphoribosyltransferase (202 aa).

5-phospho-alpha-D-ribose 1-diphosphate contacts are provided by residues Lys-93 and 113–121 (EDIITTGGS). Residues Thr-117 and Arg-145 each coordinate orotate.

Belongs to the purine/pyrimidine phosphoribosyltransferase family. PyrE subfamily. As to quaternary structure, homodimer. Mg(2+) serves as cofactor.

The enzyme catalyses orotidine 5'-phosphate + diphosphate = orotate + 5-phospho-alpha-D-ribose 1-diphosphate. It functions in the pathway pyrimidine metabolism; UMP biosynthesis via de novo pathway; UMP from orotate: step 1/2. In terms of biological role, catalyzes the transfer of a ribosyl phosphate group from 5-phosphoribose 1-diphosphate to orotate, leading to the formation of orotidine monophosphate (OMP). The sequence is that of Orotate phosphoribosyltransferase from Campylobacter jejuni subsp. jejuni serotype O:23/36 (strain 81-176).